We begin with the raw amino-acid sequence, 228 residues long: Tumor necrosis factor receptor superfamily member 18 (228 aa).

A signal peptide spans 1-19; it reads MGAWAMLYGVSMLCVLDLG. Residues 20 to 153 are Extracellular-facing; it reads QPSVVEEPGC…EPLPTEQYGH (134 aa). TNFR-Cys repeat units lie at residues 28–61, 62–101, and 102–142; these read GCGP…ERCI, CVTP…FRCV, and ACAM…AVCI. 5 cysteine pairs are disulfide-bonded: cysteine 29-cysteine 44, cysteine 62-cysteine 74, cysteine 69-cysteine 82, cysteine 103-cysteine 122, and cysteine 116-cysteine 141. Asparagine 36 and asparagine 40 each carry an N-linked (GlcNAc...) asparagine glycan. N-linked (GlcNAc...) asparagine glycans are attached at residues asparagine 121 and asparagine 134. The helical transmembrane segment at 154-174 threads the bilayer; that stretch reads LTVIFLVMAACIFFLTTVQLG. Topologically, residues 175 to 228 are cytoplasmic; it reads LHIWQLRRQHMCPRETQPFAEVQLSAEDACSFQFPEEERGEQTEEKCHLGGRWP.

Binds to TRAF1, TRAF2, and TRAF3, but not TRAF5 and TRAF6. Binds through its C-terminus to SIVA1/SIVA. As to expression, preferentially expressed in activated T lymphocytes.

It localises to the cell membrane. Its subcellular location is the secreted. Functionally, receptor for TNFSF18. Seems to be involved in interactions between activated T-lymphocytes and endothelial cells and in the regulation of T-cell receptor-mediated cell death. Mediated NF-kappa-B activation via the TRAF2/NIK pathway. The polypeptide is Tumor necrosis factor receptor superfamily member 18 (Tnfrsf18) (Mus musculus (Mouse)).